Here is a 144-residue protein sequence, read N- to C-terminus: L-fucose mutarotase (144 aa).

His-22 functions as the Proton donor in the catalytic mechanism. Residues Asp-30, Arg-109, and 131–133 each bind substrate; that span reads YGN.

Belongs to the RbsD / FucU family. FucU mutarotase subfamily. As to quaternary structure, homodecamer.

It localises to the cytoplasm. The catalysed reaction is alpha-L-fucose = beta-L-fucose. It participates in carbohydrate metabolism; L-fucose metabolism. In terms of biological role, involved in the anomeric conversion of L-fucose. In Haemophilus influenzae (strain 86-028NP), this protein is L-fucose mutarotase.